We begin with the raw amino-acid sequence, 635 residues long: 1-deoxy-D-xylulose-5-phosphate synthase (635 aa).

Residues H74 and 115–117 (AHS) contribute to the thiamine diphosphate site. D146 serves as a coordination point for Mg(2+). Thiamine diphosphate-binding positions include 147-148 (GA), N176, Y283, and E365. Position 176 (N176) interacts with Mg(2+).

The protein belongs to the transketolase family. DXPS subfamily. In terms of assembly, homodimer. Mg(2+) serves as cofactor. The cofactor is thiamine diphosphate.

It catalyses the reaction D-glyceraldehyde 3-phosphate + pyruvate + H(+) = 1-deoxy-D-xylulose 5-phosphate + CO2. It functions in the pathway metabolic intermediate biosynthesis; 1-deoxy-D-xylulose 5-phosphate biosynthesis; 1-deoxy-D-xylulose 5-phosphate from D-glyceraldehyde 3-phosphate and pyruvate: step 1/1. Its function is as follows. Catalyzes the acyloin condensation reaction between C atoms 2 and 3 of pyruvate and glyceraldehyde 3-phosphate to yield 1-deoxy-D-xylulose-5-phosphate (DXP). The sequence is that of 1-deoxy-D-xylulose-5-phosphate synthase from Paraburkholderia xenovorans (strain LB400).